The chain runs to 192 residues: NADH dehydrogenase [ubiquinone] iron-sulfur protein 3 (192 aa).

This sequence belongs to the complex I 30 kDa subunit family. In terms of assembly, complex I is composed of about 45 different subunits. This is a component of the iron-sulfur (IP) fragment of the enzyme.

It is found in the mitochondrion inner membrane. It carries out the reaction a ubiquinone + NADH + 5 H(+)(in) = a ubiquinol + NAD(+) + 4 H(+)(out). Its function is as follows. Core subunit of the mitochondrial membrane respiratory chain NADH dehydrogenase (Complex I) that is believed to belong to the minimal assembly required for catalysis. Complex I functions in the transfer of electrons from NADH to the respiratory chain. The immediate electron acceptor for the enzyme is believed to be ubiquinone. This Patellifolia webbiana (Patellaria webbiana) protein is NADH dehydrogenase [ubiquinone] iron-sulfur protein 3 (NAD9).